Reading from the N-terminus, the 188-residue chain is Elongation factor P (188 aa).

N6-(3,6-diaminohexanoyl)-5-hydroxylysine is present on lysine 34.

This sequence belongs to the elongation factor P family. May be beta-lysylated on the epsilon-amino group of Lys-34 by the combined action of EpmA and EpmB, and then hydroxylated on the C5 position of the same residue by EpmC (if this protein is present). Lysylation is critical for the stimulatory effect of EF-P on peptide-bond formation. The lysylation moiety may extend toward the peptidyltransferase center and stabilize the terminal 3-CCA end of the tRNA. Hydroxylation of the C5 position on Lys-34 may allow additional potential stabilizing hydrogen-bond interactions with the P-tRNA.

It is found in the cytoplasm. The protein operates within protein biosynthesis; polypeptide chain elongation. Functionally, involved in peptide bond synthesis. Alleviates ribosome stalling that occurs when 3 or more consecutive Pro residues or the sequence PPG is present in a protein, possibly by augmenting the peptidyl transferase activity of the ribosome. Modification of Lys-34 is required for alleviation. The sequence is that of Elongation factor P from Vibrio cholerae serotype O1 (strain ATCC 39541 / Classical Ogawa 395 / O395).